A 261-amino-acid polypeptide reads, in one-letter code: Triosephosphate isomerase (261 aa).

Position 10 to 12 (10 to 12 (NWK)) interacts with substrate. Catalysis depends on His-100, which acts as the Electrophile. The active-site Proton acceptor is Glu-172. Residues Gly-178, Ser-218, and 239–240 (GG) contribute to the substrate site.

It belongs to the triosephosphate isomerase family. As to quaternary structure, homodimer.

Its subcellular location is the cytoplasm. The catalysed reaction is D-glyceraldehyde 3-phosphate = dihydroxyacetone phosphate. The protein operates within carbohydrate biosynthesis; gluconeogenesis. Its pathway is carbohydrate degradation; glycolysis; D-glyceraldehyde 3-phosphate from glycerone phosphate: step 1/1. In terms of biological role, involved in the gluconeogenesis. Catalyzes stereospecifically the conversion of dihydroxyacetone phosphate (DHAP) to D-glyceraldehyde-3-phosphate (G3P). This is Triosephosphate isomerase from Mycobacterium bovis (strain BCG / Pasteur 1173P2).